The primary structure comprises 288 residues: Acetyl-coenzyme A carboxylase carboxyl transferase subunit beta (288 aa).

The CoA carboxyltransferase N-terminal domain occupies 34 to 288 (LFAKCPACKH…HLVAFHGGGQ (255 aa)). Residues Cys38, Cys41, Cys56, and Cys59 each coordinate Zn(2+). The C4-type zinc finger occupies 38 to 59 (CPACKHMIYKKDLGLAKICPTC).

It belongs to the AccD/PCCB family. As to quaternary structure, acetyl-CoA carboxylase is a heterohexamer composed of biotin carboxyl carrier protein (AccB), biotin carboxylase (AccC) and two subunits each of ACCase subunit alpha (AccA) and ACCase subunit beta (AccD). Zn(2+) serves as cofactor.

It is found in the cytoplasm. The enzyme catalyses N(6)-carboxybiotinyl-L-lysyl-[protein] + acetyl-CoA = N(6)-biotinyl-L-lysyl-[protein] + malonyl-CoA. Its pathway is lipid metabolism; malonyl-CoA biosynthesis; malonyl-CoA from acetyl-CoA: step 1/1. Component of the acetyl coenzyme A carboxylase (ACC) complex. Biotin carboxylase (BC) catalyzes the carboxylation of biotin on its carrier protein (BCCP) and then the CO(2) group is transferred by the transcarboxylase to acetyl-CoA to form malonyl-CoA. In Streptococcus pyogenes serotype M6 (strain ATCC BAA-946 / MGAS10394), this protein is Acetyl-coenzyme A carboxylase carboxyl transferase subunit beta.